The primary structure comprises 413 residues: Putative competence-damage inducible protein (413 aa).

Belongs to the CinA family.

The sequence is that of Putative competence-damage inducible protein from Halothermothrix orenii (strain H 168 / OCM 544 / DSM 9562).